Here is a 333-residue protein sequence, read N- to C-terminus: Cytochrome f (333 aa).

The signal sequence occupies residues 1 to 37 (MRNSCKKARRTRPLKATIQALLVAIATMTFFFTSDIA). Over 38-298 (LPQSAAAYPF…TEIVLQDPNR (261 aa)) the chain is Cytoplasmic. 4 residues coordinate heme: Y45, C66, C69, and H70. The helical transmembrane segment at 299–319 (VKWMIAFICLVMLAQLMLILK) threads the bilayer. The Lumenal, thylakoid portion of the chain corresponds to 320–333 (KKQVEKVQAAEMNF).

The protein belongs to the cytochrome f family. In terms of assembly, the 4 large subunits of the cytochrome b6-f complex are cytochrome b6, subunit IV (17 kDa polypeptide, PetD), cytochrome f and the Rieske protein, while the 4 small subunits are PetG, PetL, PetM and PetN. The complex functions as a dimer. The cofactor is heme.

It is found in the cellular thylakoid membrane. Component of the cytochrome b6-f complex, which mediates electron transfer between photosystem II (PSII) and photosystem I (PSI), cyclic electron flow around PSI, and state transitions. This Mastigocladus laminosus (Fischerella sp.) protein is Cytochrome f (petA).